A 304-amino-acid polypeptide reads, in one-letter code: Xylanase inhibitor protein 1 (304 aa).

Positions 1-29 (MVALGRRSWLVPLAMVLAVSSCLAGPAMA) are cleaved as a signal peptide. Residues 34 to 304 (GQMTVFWGRN…GYGKTVKYWA (271 aa)) form the GH18 domain. 2 disulfide bridges follow: Cys-53–Cys-93 and Cys-190–Cys-219.

Belongs to the glycosyl hydrolase 18 family. Xylanase inhibitor subfamily. As to quaternary structure, binds to fungal GH11 xylanases. As to expression, constitutively expressed in shoots.

The protein resides in the secreted. Fungal xylanase inhibitor. Possesses competitive inhibiting activity against fungal endo-1,4-beta-D-xylanases belonging to glycoside hydrolase family 11 (GH11). May function in plant defense against secreted fungal pathogen xylanases. Is similar to class III chitinases, but does not exhibit chitinase activity. The chain is Xylanase inhibitor protein 1 from Oryza sativa subsp. japonica (Rice).